A 312-amino-acid polypeptide reads, in one-letter code: Glycine--tRNA ligase alpha subunit (312 aa).

The protein belongs to the class-II aminoacyl-tRNA synthetase family. Tetramer of two alpha and two beta subunits.

It localises to the cytoplasm. It carries out the reaction tRNA(Gly) + glycine + ATP = glycyl-tRNA(Gly) + AMP + diphosphate. In Nostoc punctiforme (strain ATCC 29133 / PCC 73102), this protein is Glycine--tRNA ligase alpha subunit.